The chain runs to 154 residues: Ribosome maturation factor RimP (154 aa).

This sequence belongs to the RimP family.

The protein resides in the cytoplasm. Functionally, required for maturation of 30S ribosomal subunits. This chain is Ribosome maturation factor RimP, found in Clostridium kluyveri (strain ATCC 8527 / DSM 555 / NBRC 12016 / NCIMB 10680 / K1).